The following is a 114-amino-acid chain: Fumarate reductase subunit D (114 aa).

3 consecutive transmembrane segments (helical) span residues 24–44 (VSAI…PFGL), 50–70 (LITF…TIFP), and 92–112 (GGFI…FAVI).

Belongs to the FrdD family. As to quaternary structure, part of an enzyme complex containing four subunits: a flavoprotein (FrdA), an iron-sulfur protein (FrdB), and two hydrophobic anchor proteins (FrdC and FrdD).

The protein localises to the cell inner membrane. Anchors the catalytic components of the fumarate reductase complex to the cell membrane, binds quinones. This is Fumarate reductase subunit D from Haemophilus influenzae (strain PittGG).